The chain runs to 311 residues: UDP-N-acetylenolpyruvoylglucosamine reductase (311 aa).

The FAD-binding PCMH-type domain maps to Ile29–Ile191. Residue Arg172 is part of the active site. Ser223 serves as the catalytic Proton donor. The active site involves Glu299.

This sequence belongs to the MurB family. The cofactor is FAD.

The protein resides in the cytoplasm. It catalyses the reaction UDP-N-acetyl-alpha-D-muramate + NADP(+) = UDP-N-acetyl-3-O-(1-carboxyvinyl)-alpha-D-glucosamine + NADPH + H(+). It participates in cell wall biogenesis; peptidoglycan biosynthesis. Cell wall formation. The chain is UDP-N-acetylenolpyruvoylglucosamine reductase from Chloroherpeton thalassium (strain ATCC 35110 / GB-78).